The primary structure comprises 479 residues: Ribosomal RNA small subunit methyltransferase F (479 aa).

S-adenosyl-L-methionine-binding positions include 125–131, glutamate 149, aspartate 176, and aspartate 194; that span reads AAAPGSK. Catalysis depends on cysteine 247, which acts as the Nucleophile.

The protein belongs to the class I-like SAM-binding methyltransferase superfamily. RsmB/NOP family.

The protein localises to the cytoplasm. The enzyme catalyses cytidine(1407) in 16S rRNA + S-adenosyl-L-methionine = 5-methylcytidine(1407) in 16S rRNA + S-adenosyl-L-homocysteine + H(+). Its function is as follows. Specifically methylates the cytosine at position 1407 (m5C1407) of 16S rRNA. This is Ribosomal RNA small subunit methyltransferase F from Escherichia coli O139:H28 (strain E24377A / ETEC).